Reading from the N-terminus, the 180-residue chain is Bifunctional protein PyrR (180 aa).

Residues 101-113 carry the PRPP-binding motif; it reads VVLVDDVIFKGRT.

This sequence belongs to the purine/pyrimidine phosphoribosyltransferase family. PyrR subfamily.

It carries out the reaction UMP + diphosphate = 5-phospho-alpha-D-ribose 1-diphosphate + uracil. Its function is as follows. Regulates the transcription of the pyrimidine nucleotide (pyr) operon in response to exogenous pyrimidines. Functionally, also displays a weak uracil phosphoribosyltransferase activity which is not physiologically significant. The chain is Bifunctional protein PyrR from Trichormus variabilis (strain ATCC 29413 / PCC 7937) (Anabaena variabilis).